Reading from the N-terminus, the 470-residue chain is Cyclic AMP receptor-like protein D (470 aa).

Over 1 to 16 (MSSCSSLSMDDRVKIG) the chain is Extracellular. Residues 17 to 37 (YGSIAGASLSIIGSIGTIILI) traverse the membrane as a helical segment. The Cytoplasmic portion of the chain corresponds to 38–123 (KIRNKKQEKK…NNNQKTKVSH (86 aa)). Residues 124-144 (FIINLSIANLLASIFMITIKL) traverse the membrane as a helical segment. Topologically, residues 145-176 (MMIHFNDKFIKVLPSTANHSFNALISVCTIGN) are extracellular. Residue Asn-162 is glycosylated (N-linked (GlcNAc...) asparagine). Cys-172 and Cys-287 form a disulfide bridge. A helical transmembrane segment spans residues 177 to 197 (GVIGFSFISTFFWTLAISMYI). Residues 198–253 (YQQFLSSSTINSNNNNNNINNINNNNNNNINNINNSKNNNSINNFNNSNKSNKIIK) lie on the Cytoplasmic side of the membrane. The helical transmembrane segment at 254–274 (MLFYFVCWVIPFVLGSILVSG) threads the bilayer. Residues 275–295 (SRLIELNSDLPWCSIDSNIQL) are Extracellular-facing. Residues 296–316 (ISFYFPLIICLLATTFFTILI) form a helical membrane-spanning segment. The Cytoplasmic portion of the chain corresponds to 317–342 (KYKFSNDKLACSSSSLINLQSKIIQR). The chain crosses the membrane as a helical span at residues 343–363 (LILFLIVILVCWVPSLISFFI). Residues 364 to 372 (SFFSKNCKQ) are Extracellular-facing. The helical transmembrane segment at 373 to 393 (FLWLEIISSTIQSCQGILNFL) threads the bilayer. Topologically, residues 394–470 (SYLSIFKKLK…DFDNNQIQEK (77 aa)) are cytoplasmic.

The protein belongs to the G-protein coupled receptor 5 family.

The protein localises to the membrane. Functionally, receptor for cAMP. In Dictyostelium discoideum (Social amoeba), this protein is Cyclic AMP receptor-like protein D (crlD).